A 252-amino-acid polypeptide reads, in one-letter code: Sugar fermentation stimulation protein homolog (252 aa).

This sequence belongs to the SfsA family.

In Picosynechococcus sp. (strain ATCC 27264 / PCC 7002 / PR-6) (Agmenellum quadruplicatum), this protein is Sugar fermentation stimulation protein homolog.